Reading from the N-terminus, the 1012-residue chain is Ubiquitin-activating enzyme E1 1 (1012 aa).

Arg-22 contacts ATP. A Phosphoserine modification is found at Ser-264. The ATP site is built by Ala-437 and Asp-463. Mg(2+)-binding residues include Asp-465 and Glu-468. Residues Asn-471, Arg-474, Lys-487, Val-513, Asp-537, and Asn-538 each coordinate ATP. Asp-537 provides a ligand contact to Mg(2+). Lys-588 is covalently cross-linked (Glycyl lysine isopeptide (Lys-Gly) (interchain with G-Cter in ubiquitin)). Residue Cys-593 is the Glycyl thioester intermediate of the active site. Ser-903 carries the post-translational modification Phosphoserine.

The protein belongs to the ubiquitin-activating E1 family. In terms of assembly, monomer. Interacts with the E2 ubiquitin-conjugating enzyme ubc4.

The protein resides in the cytoplasm. Its subcellular location is the nucleus. It catalyses the reaction ATP + ubiquitin + [E1 ubiquitin-activating enzyme]-L-cysteine = AMP + diphosphate + S-ubiquitinyl-[E1 ubiquitin-activating enzyme]-L-cysteine.. Its pathway is protein modification; protein ubiquitination. Its activity is regulated as follows. Ubiquitin transfer between the E1 ubiquitin-activating enzyme ptr3 and E2 ubiquitin-conjugating enzyme ubc4 is enhanced by the presence of magnesium and ATP, or adenylated ubiquitin. Functionally, E1 ubiquitin-activating enzyme that catalyzes the first step in ubiquitin conjugation to mark cellular proteins for degradation through the ubiquitin-proteasome system. Activates ubiquitin by first adenylating its C-terminal glycine residue with ATP, and thereafter linking this residue to the side chain of a cysteine residue in E1, yielding a ubiquitin-E1 thioester and free AMP. The sequence is that of Ubiquitin-activating enzyme E1 1 (ptr3) from Schizosaccharomyces pombe (strain 972 / ATCC 24843) (Fission yeast).